A 151-amino-acid chain; its full sequence is S-ribosylhomocysteine lyase (151 aa).

Fe cation contacts are provided by His54, His58, and Cys121.

It belongs to the LuxS family. As to quaternary structure, homodimer. Requires Fe cation as cofactor.

It catalyses the reaction S-(5-deoxy-D-ribos-5-yl)-L-homocysteine = (S)-4,5-dihydroxypentane-2,3-dione + L-homocysteine. Functionally, involved in the synthesis of autoinducer 2 (AI-2) which is secreted by bacteria and is used to communicate both the cell density and the metabolic potential of the environment. The regulation of gene expression in response to changes in cell density is called quorum sensing. Catalyzes the transformation of S-ribosylhomocysteine (RHC) to homocysteine (HC) and 4,5-dihydroxy-2,3-pentadione (DPD). In Clostridioides difficile (strain 630) (Peptoclostridium difficile), this protein is S-ribosylhomocysteine lyase.